Consider the following 260-residue polypeptide: Dehydrogenase/reductase SDR family member 11 (260 aa).

A signal peptide spans 1–30; the sequence is MARPGMERWRDRLALVTGASGGIGAAVARA. Residues 18–23, 43–44, E49, 70–71, and N97 contribute to the NADP(+) site; these read GASGGI, RT, and DL. The substrate site is built by S151 and Y166. Residues Y166, K170, 201–204, and K208 each bind NADP(+); that span reads VETQ. Y166 serves as the catalytic Proton acceptor.

It belongs to the short-chain dehydrogenases/reductases (SDR) family. In terms of assembly, homotetramer. As to expression, isoform 1: Ubiquitously expressed, with highest levels in testis, small intestine, colon, kidney, brain and heart. Isoform 3: Expressed in brain, heart and skeletal muscle.

The protein localises to the secreted. It carries out the reaction a 3beta-hydroxysteroid + NADP(+) = a 3-oxosteroid + NADPH + H(+). It catalyses the reaction 17beta-estradiol + NAD(+) = estrone + NADH + H(+). The enzyme catalyses 17beta-estradiol + NADP(+) = estrone + NADPH + H(+). Its pathway is steroid biosynthesis; estrogen biosynthesis. With respect to regulation, inhibited by flavonoids including apigenin, luteolin, genistein, kaempferol and quercetin and also by carbenoxolone, zearalenone, glycyrrhetinic, curcumin and flufenamic acid. Functionally, catalyzes the conversion of the 17-keto group of estrone, 4- and 5-androstenes and 5-alpha-androstanes into their 17-beta-hydroxyl metabolites and the conversion of the 3-keto group of 3-, 3,17- and 3,20- diketosteroids into their 3-hydroxyl metabolites. Exhibits reductive 3-beta-hydroxysteroid dehydrogenase activity toward 5-beta-androstanes, 5-beta-pregnanes, 4-pregnenes and bile acids. May also reduce endogenous and exogenous alpha-dicarbonyl compounds and xenobiotic alicyclic ketones. This Homo sapiens (Human) protein is Dehydrogenase/reductase SDR family member 11 (DHRS11).